An 860-amino-acid chain; its full sequence is Pentatricopeptide repeat-containing protein At1g18900 (860 aa).

8 PPR repeats span residues 363 to 397 (DGHTYTTMVGNLGRAKQFGAINKLLDEMVRDGCQP), 398 to 432 (NTVTYNRLIHSYGRANYLNEAMNVFNQMQEAGCKP), 433 to 467 (DRVTYCTLIDIHAKAGFLDIAMDMYQRMQAGGLSP), 468 to 502 (DTFTYSVIINCLGKAGHLPAAHKLFCEMVDQGCTP), 503 to 537 (NLVTYNIMMDLHAKARNYQNALKLYRDMQNAGFEP), 538 to 572 (DKVTYSIVMEVLGHCGYLEEAEAVFTEMQQKNWIP), 573 to 607 (DEPVYGLLVDLWGKAGNVEKAWQWYQAMLHAGLRP), and 608 to 642 (NVPTCNSLLSTFLRVNKIAEAYELLQNMLALGLRP). In terms of domain architecture, Smr spans 760–843 (INLHVMSEGT…NSGCFVGSGE (84 aa)).

It belongs to the PPR family. P subfamily.

The chain is Pentatricopeptide repeat-containing protein At1g18900 from Arabidopsis thaliana (Mouse-ear cress).